The chain runs to 238 residues: Gem-associated protein 8 (238 aa).

The tract at residues 66-127 (AGHPWDSQGQ…LESDSDDEVE (62 aa)) is disordered. 2 stretches are compositionally biased toward polar residues: residues 72–82 (SQGQHMAQQES) and 96–108 (LRNSSRTQASTRG). The segment covering 113–127 (CEEEELESDSDDEVE) has biased composition (acidic residues). S122 carries the post-translational modification Phosphoserine. Residues 131–164 (SNMEITEELRQYFAQTERHREERRRQQQLDAERL) adopt a coiled-coil conformation.

In terms of assembly, part of the core SMN complex that contains SMN1, GEMIN2/SIP1, DDX20/GEMIN3, GEMIN4, GEMIN5, GEMIN6, GEMIN7, GEMIN8 and STRAP/UNRIP. Part of the SMN-Sm complex that contains SMN1, GEMIN2/SIP1, DDX20/GEMIN3, GEMIN4, GEMIN5, GEMIN6, GEMIN7, GEMIN8, STRAP/UNRIP and the Sm proteins SNRPB, SNRPD1, SNRPD2, SNRPD3, SNRPE, SNRPF and SNRPG. Interacts with GEMIN6; the interaction is direct. Interacts with GEMIN7; the interaction is direct. Interacts with SMN1; the interaction is direct. Interacts with GEMIN4; the interaction is direct. As to expression, widely expressed in embryonic tissues (at protein level).

It localises to the nucleus. Its subcellular location is the gem. It is found in the cytoplasm. The SMN complex catalyzes the assembly of small nuclear ribonucleoproteins (snRNPs), the building blocks of the spliceosome, and thereby plays an important role in the splicing of cellular pre-mRNAs. Most spliceosomal snRNPs contain a common set of Sm proteins SNRPB, SNRPD1, SNRPD2, SNRPD3, SNRPE, SNRPF and SNRPG that assemble in a heptameric protein ring on the Sm site of the small nuclear RNA to form the core snRNP (Sm core). In the cytosol, the Sm proteins SNRPD1, SNRPD2, SNRPE, SNRPF and SNRPG are trapped in an inactive 6S pICln-Sm complex by the chaperone CLNS1A that controls the assembly of the core snRNP. To assemble core snRNPs, the SMN complex accepts the trapped 5Sm proteins from CLNS1A forming an intermediate. Binding of snRNA inside 5Sm triggers eviction of the SMN complex, thereby allowing binding of SNRPD3 and SNRPB to complete assembly of the core snRNP. This chain is Gem-associated protein 8 (Gemin8), found in Mus musculus (Mouse).